We begin with the raw amino-acid sequence, 220 residues long: uncharacterized protein (220 aa).

The disordered stretch occupies residues D194–I220. Over residues Q195–N204 the composition is skewed to polar residues.

This is an uncharacterized protein from Borreliella burgdorferi (strain ATCC 35210 / DSM 4680 / CIP 102532 / B31) (Borrelia burgdorferi).